Consider the following 278-residue polypeptide: 4-deoxy-L-threo-5-hexosulose-uronate ketol-isomerase (278 aa).

Residues His-196, His-198, Glu-203, and His-245 each coordinate Zn(2+).

Belongs to the KduI family. The cofactor is Zn(2+).

The catalysed reaction is 5-dehydro-4-deoxy-D-glucuronate = 3-deoxy-D-glycero-2,5-hexodiulosonate. It functions in the pathway glycan metabolism; pectin degradation; 2-dehydro-3-deoxy-D-gluconate from pectin: step 4/5. Its function is as follows. Catalyzes the isomerization of 5-dehydro-4-deoxy-D-glucuronate to 3-deoxy-D-glycero-2,5-hexodiulosonate. This is 4-deoxy-L-threo-5-hexosulose-uronate ketol-isomerase from Pectobacterium carotovorum subsp. carotovorum (Erwinia carotovora subsp. carotovora).